The following is a 283-amino-acid chain: Thymidylate synthase (283 aa).

Residue arginine 22 coordinates dUMP. The active-site Nucleophile is cysteine 160. Residues 180 to 183, asparagine 191, and 221 to 223 each bind dUMP; these read RSCD and HIY. Residue aspartate 183 coordinates (6R)-5,10-methylene-5,6,7,8-tetrahydrofolate. (6R)-5,10-methylene-5,6,7,8-tetrahydrofolate is bound at residue alanine 282.

This sequence belongs to the thymidylate synthase family. Bacterial-type ThyA subfamily. In terms of assembly, homodimer.

The protein localises to the cytoplasm. The enzyme catalyses dUMP + (6R)-5,10-methylene-5,6,7,8-tetrahydrofolate = 7,8-dihydrofolate + dTMP. Its pathway is pyrimidine metabolism; dTTP biosynthesis. Functionally, catalyzes the reductive methylation of 2'-deoxyuridine-5'-monophosphate (dUMP) to 2'-deoxythymidine-5'-monophosphate (dTMP) while utilizing 5,10-methylenetetrahydrofolate (mTHF) as the methyl donor and reductant in the reaction, yielding dihydrofolate (DHF) as a by-product. This enzymatic reaction provides an intracellular de novo source of dTMP, an essential precursor for DNA biosynthesis. This Shewanella frigidimarina (strain NCIMB 400) protein is Thymidylate synthase.